A 100-amino-acid chain; its full sequence is SAGA-associated factor 11 (100 aa).

The SGF11-type zinc finger occupies F73 to C94.

It belongs to the SGF11 family. In terms of assembly, component of the 1.8 MDa SAGA transcription coactivator-HAT complex. SAGA is built of 5 distinct domains with specialized functions. Within the SAGA complex, SUS1, SGF11, SGF73 and UBP8 form an additional subcomplex of SAGA called the DUB module (deubiquitination module). Interacts directly with SGF73, SUS1 and UBP8.

It localises to the nucleus. In terms of biological role, functions as a component of the transcription regulatory histone acetylation (HAT) complex SAGA. At the promoters, SAGA is required for recruitment of the basal transcription machinery. It influences RNA polymerase II transcriptional activity through different activities such as TBP interaction and promoter selectivity, interaction with transcription activators, and chromatin modification through histone acetylation and deubiquitination. SAGA acetylates nucleosomal histone H3 to some extent (to form H3K9ac, H3K14ac, H3K18ac and H3K23ac). SAGA interacts with DNA via upstream activating sequences (UASs). Involved in transcriptional regulation of a subset of SAGA-regulated genes. Within the SAGA complex, participates in a subcomplex, that specifically deubiquitinates histones H2B. The protein is SAGA-associated factor 11 of Debaryomyces hansenii (strain ATCC 36239 / CBS 767 / BCRC 21394 / JCM 1990 / NBRC 0083 / IGC 2968) (Yeast).